Consider the following 174-residue polypeptide: Neuromedin-U (174 aa).

A signal peptide spans 1–34; sequence MLRTESCRPRSPAGQVAAASPLLLLLLLLAWCAG. Residues 35–103 constitute a propeptide that is removed on maturation; it reads ACRGAPILPQ…EQDEKDNTKR (69 aa). A Methionine sulfoxide; partial modification is found at Met-139. An Asparagine amide modification is found at Asn-166. The propeptide occupies 170–174; that stretch reads SAGFI.

This sequence belongs to the NmU family. Expressed throughout the enteric nervous system with highest levels being found in the jejunum.

Its subcellular location is the secreted. Functionally, ligand for receptors NMUR1 and NMUR2. Stimulates muscle contractions of specific regions of the gastrointestinal tract. In humans, NmU stimulates contractions of the ileum and urinary bladder. In terms of biological role, does not function as a ligand for either NMUR1 or NMUR2. Indirectly induces prolactin release although its potency is much lower than that of neuromedin precursor-related peptide 36. Its function is as follows. Does not function as a ligand for either NMUR1 or NMUR2. Indirectly induces prolactin release from lactotroph cells in the pituitary gland, probably via the hypothalamic dopaminergic system. The chain is Neuromedin-U (NMU) from Homo sapiens (Human).